Here is a 189-residue protein sequence, read N- to C-terminus: Testis-expressed protein 22 (189 aa).

The disordered stretch occupies residues 1-120 (MDSRQQRPQR…TQSVPTPPLQ (120 aa)). The span at 14–24 (QWQLAQEQRQQ) shows a compositional bias: low complexity. Residues 70 to 87 (IDERRRLALQRMQERTDT) are compositionally biased toward basic and acidic residues. The segment covering 103-114 (QQTETSPSTQSV) has biased composition (low complexity).

As to expression, mainly expressed in spermatocytes and spermatids in testis.

It localises to the cytoplasm. Its subcellular location is the cytoplasmic vesicle. The protein localises to the secretory vesicle. The protein resides in the acrosome. The chain is Testis-expressed protein 22 (Tex22) from Mus musculus (Mouse).